The primary structure comprises 145 residues: Large ribosomal subunit protein uL13 (145 aa).

The protein belongs to the universal ribosomal protein uL13 family. Part of the 50S ribosomal subunit.

Functionally, this protein is one of the early assembly proteins of the 50S ribosomal subunit, although it is not seen to bind rRNA by itself. It is important during the early stages of 50S assembly. In Bacillus cereus (strain G9842), this protein is Large ribosomal subunit protein uL13.